The sequence spans 538 residues: Syncytin-1 (538 aa).

Residues 1–20 form the signal peptide; it reads MALPYHIFLFTVLLPSFTLT. Over 31–443 the chain is Extracellular; the sequence is SSPYQEFLWR…NIGPWGLLSQ (413 aa). Asn-169 carries an N-linked (GlcNAc...) asparagine glycan. The short motif at 186–189 is the CXXC element; it reads CWMC. Intrachain disulfides connect Cys-186–Cys-189, Cys-186–Cys-405, and Cys-397–Cys-404. N-linked (GlcNAc...) asparagine glycosylation is found at Asn-208, Asn-214, Asn-234, Asn-242, and Asn-281. The segment at 320 to 340 is fusion peptide; that stretch reads ILPFVMGAGVLGALGTGIGSI. Residues 380–396 form an immunosuppression region; it reads LQNRRALDLLTAERGGT. The CX6CC motif lies at 397–405; sequence CLFLGEECC. N-linked (GlcNAc...) asparagine glycosylation is present at Asn-409. The chain crosses the membrane as a helical span at residues 444 to 464; the sequence is WMPWILPFLGPLAAIILLLLF. The tract at residues 465 to 484 is essential for the fusiogenic function; it reads GPCIFNLLVNFVSSRIEAIK. Residues 465 to 538 lie on the Cytoplasmic side of the membrane; sequence GPCIFNLLVN…LLRPNSAGSS (74 aa). The interval 494-538 is disordered; the sequence is KTKNYRRSLDWPASPRSDVNDIKGIPPEEISTAQPLLRPNSAGSS.

The protein belongs to the gamma type-C retroviral envelope protein family. HERV class-I W env subfamily. In terms of assembly, the mature envelope protein (Env) consists of a trimer of SU-TM heterodimers attached probably by a labile interchain disulfide bond. Interacts with the C-type lectin CD209/DC-SIGN. Specific enzymatic cleavages in vivo yield mature proteins. Envelope glycoproteins are synthesized as an inactive precursor that is heavily N-glycosylated and processed likely by furin in the Golgi to yield the mature SU and TM proteins. The cleavage site between SU and TM requires the minimal sequence [KR]-X-[KR]-R. Post-translationally, the CXXC motif is highly conserved across a broad range of retroviral envelope proteins. It is thought to participate in the formation of a labile disulfide bond possibly with the CX6CC motif present in the transmembrane protein.

It localises to the cell membrane. The protein resides in the virion. In terms of biological role, this endogenous retroviral envelope protein has retained its original fusogenic properties and participates in trophoblast fusion and the formation of a syncytium during placenta morphogenesis. May recognize and induce fusion through binding of SLC1A4 and SLC1A5. Its function is as follows. Endogenous envelope proteins may have kept, lost or modified their original function during evolution. Retroviral envelope proteins mediate receptor recognition and membrane fusion during early infection. The surface protein (SU) mediates receptor recognition, while the transmembrane protein (TM) acts as a class I viral fusion protein. The protein may have at least 3 conformational states: pre-fusion native state, pre-hairpin intermediate state, and post-fusion hairpin state. During viral and target cell membrane fusion, the coiled coil regions (heptad repeats) assume a trimer-of-hairpins structure, positioning the fusion peptide in close proximity to the C-terminal region of the ectodomain. The formation of this structure appears to drive apposition and subsequent fusion of membranes. The protein is Syncytin-1 (ERVW-1) of Hylobates pileatus (Pileated gibbon).